A 200-amino-acid polypeptide reads, in one-letter code: Probable nicotinate-nucleotide adenylyltransferase (200 aa).

This sequence belongs to the NadD family.

The catalysed reaction is nicotinate beta-D-ribonucleotide + ATP + H(+) = deamido-NAD(+) + diphosphate. It participates in cofactor biosynthesis; NAD(+) biosynthesis; deamido-NAD(+) from nicotinate D-ribonucleotide: step 1/1. Catalyzes the reversible adenylation of nicotinate mononucleotide (NaMN) to nicotinic acid adenine dinucleotide (NaAD). This chain is Probable nicotinate-nucleotide adenylyltransferase, found in Clostridium tetani (strain Massachusetts / E88).